We begin with the raw amino-acid sequence, 54 residues long: Large ribosomal subunit protein bL33 (54 aa).

It belongs to the bacterial ribosomal protein bL33 family.

The sequence is that of Large ribosomal subunit protein bL33 from Legionella pneumophila (strain Lens).